Reading from the N-terminus, the 144-residue chain is Transmembrane protein 170A (144 aa).

At 1 to 50 the chain is on the extracellular side; sequence MEREGSGGGGGSAGLLQQILSLKLVPRVGNGTLCPNSTSLCSFPEMWYGV. 2 N-linked (GlcNAc...) asparagine glycosylation sites follow: Asn30 and Asn36. The helical transmembrane segment at 51–71 threads the bilayer; sequence FLWALMSSVFFHVPAGLLALF. The Cytoplasmic segment spans residues 72–85; the sequence is TLRHHKYGRFMSVS. A helical membrane pass occupies residues 86–106; that stretch reads ILLMGIVGPITAGILTSAAIA. Topologically, residues 107–116 are extracellular; the sequence is GVYRAAGKEM. The helical transmembrane segment at 117–137 threads the bilayer; it reads IPFEALTLGTGQTFCVVVVSF. The Cytoplasmic portion of the chain corresponds to 138–144; sequence LRVLATL.

This sequence belongs to the TMEM170 family. As to quaternary structure, interacts with RTN4.

The protein localises to the endoplasmic reticulum membrane. Its subcellular location is the nucleus envelope. Its function is as follows. Acts as a regulator of endoplasmic reticulum (ER) and nuclear envelope (NE) morphogenesis. Affects the ratio between tubular ER and ER sheets by promoting sheet formation at the expense of tubules. Influences NE expansion, nuclear pore complex formation and proper localization of inner nuclear membrane proteins. This Mus musculus (Mouse) protein is Transmembrane protein 170A (Tmem170a).